Here is a 240-residue protein sequence, read N- to C-terminus: Large ribosomal subunit protein uL2 (240 aa).

The segment covering 1–11 has biased composition (polar residues); the sequence is MGKRLISQNRG. Disordered stretches follow at residues 1-28 and 206-240; these read MGKRLISQNRGRGTPKYRSPTHKRKGAV and GGGRHQHLGKPSSVSRHTSPGRKVGHIASRRTGRK. Composition is skewed to basic residues over residues 13-28 and 224-240; these read GTPKYRSPTHKRKGAV and SPGRKVGHIASRRTGRK.

This sequence belongs to the universal ribosomal protein uL2 family. Part of the 50S ribosomal subunit. Forms a bridge to the 30S subunit in the 70S ribosome.

Its function is as follows. One of the primary rRNA binding proteins. Required for association of the 30S and 50S subunits to form the 70S ribosome, for tRNA binding and peptide bond formation. It has been suggested to have peptidyltransferase activity; this is somewhat controversial. Makes several contacts with the 16S rRNA in the 70S ribosome. The polypeptide is Large ribosomal subunit protein uL2 (Methanococcus maripaludis (strain C5 / ATCC BAA-1333)).